The primary structure comprises 554 residues: MNRRGNSMGKPMTAMLQMQAVHRDESQVVELKKTSYFPYLFNLVMPKMFYHSPNRIVVARLYLDVHTHDKQAAEYFEGFQTPCFEVPASLFPGEVPLDKIVFMPTVMLPMGFEAGGVFGPGVLPPSSYPVDLIASGHKGETPPLFVGLRCLYVHLPLEIESLLDKMGEFPASQNALVYKLHPSDHLLQKENPQELMLRPDFTLSMIYNIPAPPPPPSPYPYRHVPVQYNIYTPDLSKVLMLMPHQRNLTVAILSTVNNPHVPSVALATMGDEECPKFELPSDVFPICEGVNRPIFLPRRFLPKGFESGCVFKPGSLSELWFVNYIGRFATPQPQHTCAITPPLFVGKYCRGEGAISMFKEIQLESKKQNCNVDQSLAEGSLKAVEPKRAHVPLTKGFFVMETEHPTPPEGAHCLQSYQQASDEGCLVKVKKDEDAEITESQEKDKVYPTKVASKSENEKKYLSCFKVDSDIELVADATADMGPAEMSLLVKEKDLPGINGACVLSQLSQVLVDRDQIRSHTDQLIHNHIYRMDRDRMLALRQPIHMCSGCGTLH.

Belongs to the DM7 family.

The sequence is that of DM7 family protein GG17593 from Drosophila erecta (Fruit fly).